A 306-amino-acid polypeptide reads, in one-letter code: NAD kinase 1 (306 aa).

Catalysis depends on aspartate 67, which acts as the Proton acceptor. Residues 67–68 (DG), 149–150 (NE), aspartate 181, and 192–197 (TGYTVS) each bind NAD(+).

It belongs to the NAD kinase family. The cofactor is a divalent metal cation.

The protein localises to the cytoplasm. The catalysed reaction is NAD(+) + ATP = ADP + NADP(+) + H(+). In terms of biological role, involved in the regulation of the intracellular balance of NAD and NADP, and is a key enzyme in the biosynthesis of NADP. Catalyzes specifically the phosphorylation on 2'-hydroxyl of the adenosine moiety of NAD to yield NADP. This chain is NAD kinase 1, found in Trichormus variabilis (strain ATCC 29413 / PCC 7937) (Anabaena variabilis).